A 2275-amino-acid polypeptide reads, in one-letter code: Multifunctional protein pyrABCN (2275 aa).

Positions 1–440 (MPETVGHEEP…PGPRDTEYLF (440 aa)) are GATase (Glutamine amidotransferase). L-glutamine is bound by residues S102, G313, and G315. Residues 265 to 453 (RVLCLDVGLK…INAIKDTIAS (189 aa)) form the Glutamine amidotransferase type-1 domain. Catalysis depends on C342, which acts as the Nucleophile; for GATase activity. Residues L343, Q346, N384, G386, and Y387 each coordinate L-glutamine. Active-site for GATase activity residues include H426 and E428. Residues 441–482 (DVFINAIKDTIASPEALQKPVNFPGGAVAENIKASPRVSVKK) form a linker region. The segment at 483 to 1522 (VLILGSGGLS…TNVKNAKILI (1040 aa)) is CPSase (Carbamoyl-phosphate synthase). ATP-binding residues include R600, R640, G646, G647, R677, M679, E684, G710, I711, H712, Q753, and E767. ATP-grasp domains lie at 604-796 (ARSM…KLGL) and 1139-1330 (SRML…KAMI). The Mg(2+) site is built by Q753, E767, and N769. 3 residues coordinate Mn(2+): Q753, E767, and N769. ATP contacts are provided by R1175, K1214, I1216, E1221, G1246, V1247, H1248, S1249, Q1289, and E1301. 3 residues coordinate Mg(2+): Q1289, E1301, and N1303. Mn(2+) is bound by residues Q1289, E1301, and N1303. Residues 1396–1575 (FKLPKRNILL…KDFEAVTKAS (180 aa)) enclose the MGS-like domain. A linker region spans residues 1523–1532 (EAIARHYALN). The segment at 1533–1862 (VQTIDYQTSH…FQGKTSCLDS (330 aa)) is defective DHOase domain. A disordered region spans residues 1863-1882 (EITPDAPKGSDMSGHRIVPA). The interval 1863–1953 (EITPDAPKGS…LQMLSRSPFK (91 aa)) is linker. The interval 1954–2258 (QKHVLSVNQF…EFDMLMWMQM (305 aa)) is ATCase (Aspartate transcarbamylase). The carbamoyl phosphate site is built by R2006 and T2007. K2034 contributes to the L-aspartate binding site. The carbamoyl phosphate site is built by R2055, H2083, and Q2086. The L-aspartate site is built by R2116 and R2178. Carbamoyl phosphate contacts are provided by L2217 and P2218.

In the central section; belongs to the metallo-dependent hydrolases superfamily. DHOase family. CAD subfamily. It in the N-terminal section; belongs to the CarA family. The protein in the 2nd section; belongs to the CarB family. This sequence in the 3rd section; belongs to the metallo-dependent hydrolases superfamily. DHOase family. CAD subfamily. In the C-terminal section; belongs to the aspartate/ornithine carbamoyltransferase superfamily. ATCase family. Mg(2+) serves as cofactor. It depends on Mn(2+) as a cofactor.

It catalyses the reaction hydrogencarbonate + L-glutamine + 2 ATP + H2O = carbamoyl phosphate + L-glutamate + 2 ADP + phosphate + 2 H(+). It carries out the reaction L-glutamine + H2O = L-glutamate + NH4(+). The enzyme catalyses hydrogencarbonate + NH4(+) + 2 ATP = carbamoyl phosphate + 2 ADP + phosphate + 2 H(+). The catalysed reaction is carbamoyl phosphate + L-aspartate = N-carbamoyl-L-aspartate + phosphate + H(+). Its pathway is pyrimidine metabolism; UMP biosynthesis via de novo pathway; (S)-dihydroorotate from bicarbonate: step 1/3. It functions in the pathway pyrimidine metabolism; UMP biosynthesis via de novo pathway; (S)-dihydroorotate from bicarbonate: step 2/3. Functionally, multifunctional protein that encodes the first 2 enzymatic activities of the de novo pyrimidine pathway: carbamoylphosphate synthetase (CPSase; EC 6.3.5.5) and aspartate transcarbamylase (ATCase; EC 2.1.3.2). The CPSase-function is accomplished in 2 steps, by a glutamine-dependent amidotransferase activity (GATase) that binds and cleaves glutamine to produce ammonia, followed by an ammonium-dependent carbamoyl phosphate synthetase, which reacts with the ammonia, hydrogencarbonate and ATP to form carbamoyl phosphate. The endogenously produced carbamoyl phosphate is sequestered and channeled to the ATCase active site. ATCase then catalyzes the formation of carbamoyl-L-aspartate from L-aspartate and carbamoyl phosphate. The protein is Multifunctional protein pyrABCN of Emericella nidulans (strain FGSC A4 / ATCC 38163 / CBS 112.46 / NRRL 194 / M139) (Aspergillus nidulans).